The primary structure comprises 184 residues: Ribosome-recycling factor (184 aa).

The protein belongs to the RRF family.

It localises to the cytoplasm. Functionally, responsible for the release of ribosomes from messenger RNA at the termination of protein biosynthesis. May increase the efficiency of translation by recycling ribosomes from one round of translation to another. This Clostridium botulinum (strain Loch Maree / Type A3) protein is Ribosome-recycling factor.